The chain runs to 44 residues: Alpha-amylase inhibitor helianthamide (44 aa).

3 disulfides stabilise this stretch: Cys6/Cys38, Cys16/Cys33, and Cys20/Cys39. The tract at residues Tyr7 to His10 is inhibitory motif.

It belongs to the sea anemone alpha-amylase inhibitor family.

The protein localises to the secreted. Functionally, specific pancreatic alpha-amylase (AMY2A) inhibitor. The recombinant peptide inhibits human pancreatic (Ki=0.01 nM) and porcine pancreatic alpha-amylases (Ki=0.1 nM). This Stichodactyla helianthus (Sun anemone) protein is Alpha-amylase inhibitor helianthamide.